We begin with the raw amino-acid sequence, 62 residues long: Small ribosomal subunit protein uS14 (62 aa).

Zn(2+)-binding residues include cysteine 25, cysteine 28, cysteine 41, and cysteine 44.

This sequence belongs to the universal ribosomal protein uS14 family. Zinc-binding uS14 subfamily. As to quaternary structure, part of the 30S ribosomal subunit. Contacts proteins S3 and S10. Zn(2+) is required as a cofactor.

Functionally, binds 16S rRNA, required for the assembly of 30S particles and may also be responsible for determining the conformation of the 16S rRNA at the A site. The protein is Small ribosomal subunit protein uS14 of Sulfurihydrogenibium sp. (strain YO3AOP1).